The following is a 146-amino-acid chain: D-aminoacyl-tRNA deacylase (146 aa).

The Gly-cisPro motif, important for rejection of L-amino acids motif lies at 137–138; sequence GP.

Belongs to the DTD family. In terms of assembly, homodimer.

Its subcellular location is the cytoplasm. The catalysed reaction is glycyl-tRNA(Ala) + H2O = tRNA(Ala) + glycine + H(+). It catalyses the reaction a D-aminoacyl-tRNA + H2O = a tRNA + a D-alpha-amino acid + H(+). In terms of biological role, an aminoacyl-tRNA editing enzyme that deacylates mischarged D-aminoacyl-tRNAs. Also deacylates mischarged glycyl-tRNA(Ala), protecting cells against glycine mischarging by AlaRS. Acts via tRNA-based rather than protein-based catalysis; rejects L-amino acids rather than detecting D-amino acids in the active site. By recycling D-aminoacyl-tRNA to D-amino acids and free tRNA molecules, this enzyme counteracts the toxicity associated with the formation of D-aminoacyl-tRNA entities in vivo and helps enforce protein L-homochirality. This chain is D-aminoacyl-tRNA deacylase, found in Halalkalibacterium halodurans (strain ATCC BAA-125 / DSM 18197 / FERM 7344 / JCM 9153 / C-125) (Bacillus halodurans).